Reading from the N-terminus, the 186-residue chain is Ribosome-recycling factor (186 aa).

The protein belongs to the RRF family.

It is found in the cytoplasm. Responsible for the release of ribosomes from messenger RNA at the termination of protein biosynthesis. May increase the efficiency of translation by recycling ribosomes from one round of translation to another. This Cupriavidus necator (strain ATCC 17699 / DSM 428 / KCTC 22496 / NCIMB 10442 / H16 / Stanier 337) (Ralstonia eutropha) protein is Ribosome-recycling factor.